A 609-amino-acid chain; its full sequence is Dihydroxy-acid dehydratase (609 aa).

Mg(2+) is bound at residue D82. [2Fe-2S] cluster is bound at residue C123. Residues D124 and K125 each coordinate Mg(2+). K125 is modified (N6-carboxylysine). C192 is a binding site for [2Fe-2S] cluster. Residue E489 participates in Mg(2+) binding. S515 (proton acceptor) is an active-site residue.

The protein belongs to the IlvD/Edd family. As to quaternary structure, homodimer. The cofactor is [2Fe-2S] cluster. It depends on Mg(2+) as a cofactor.

The catalysed reaction is (2R)-2,3-dihydroxy-3-methylbutanoate = 3-methyl-2-oxobutanoate + H2O. It carries out the reaction (2R,3R)-2,3-dihydroxy-3-methylpentanoate = (S)-3-methyl-2-oxopentanoate + H2O. Its pathway is amino-acid biosynthesis; L-isoleucine biosynthesis; L-isoleucine from 2-oxobutanoate: step 3/4. It participates in amino-acid biosynthesis; L-valine biosynthesis; L-valine from pyruvate: step 3/4. Functionally, functions in the biosynthesis of branched-chain amino acids. Catalyzes the dehydration of (2R,3R)-2,3-dihydroxy-3-methylpentanoate (2,3-dihydroxy-3-methylvalerate) into 2-oxo-3-methylpentanoate (2-oxo-3-methylvalerate) and of (2R)-2,3-dihydroxy-3-methylbutanoate (2,3-dihydroxyisovalerate) into 2-oxo-3-methylbutanoate (2-oxoisovalerate), the penultimate precursor to L-isoleucine and L-valine, respectively. The sequence is that of Dihydroxy-acid dehydratase from Azobacteroides pseudotrichonymphae genomovar. CFP2.